Consider the following 299-residue polypeptide: Probable alpha-L-glutamate ligase (299 aa).

The ATP-grasp domain maps to Leu112–Glu294. Residues Lys148, Asp185 to Phe186, Asp194, and Arg218 to Asn220 each bind ATP. Mg(2+) contacts are provided by Asp255, Glu267, and Asn269. Mn(2+) is bound by residues Asp255, Glu267, and Asn269.

Belongs to the RimK family. Mg(2+) serves as cofactor. The cofactor is Mn(2+).

This is Probable alpha-L-glutamate ligase from Histophilus somni (strain 2336) (Haemophilus somnus).